Consider the following 417-residue polypeptide: Interferon regulatory factor 3 (417 aa).

Thr-3 is subject to Phosphothreonine. The IRF tryptophan pentad repeat DNA-binding region spans 5-111 (KPRILPWLIS…DPHKIYEFVN (107 aa)). Residue Ser-14 is modified to Phosphoserine. At Thr-75 the chain carries Phosphothreonine. Phosphoserine occurs at positions 97 and 123. Disordered regions lie at residues 111-134 (NSGV…TSDT) and 147-170 (DLSP…LQSP). The segment at 140–417 (EKLLSDMDLS…LQDLAEDMDF (278 aa)) is mediates interaction with ZDHHC11. Position 184 is a phosphoserine (Ser-184). A Glycyl lysine isopeptide (Lys-Gly) (interchain with G-Cter in ISG15) cross-link involves residue Lys-189. The segment at 196–356 (EDWEFEVTAF…SWPQDQPWIK (161 aa)) is interaction with HERC5. Thr-249 bears the Phosphothreonine mark. Cys-263 and Cys-285 are disulfide-bonded. Residues Lys-356 and Lys-362 each participate in a glycyl lysine isopeptide (Lys-Gly) (interchain with G-Cter in ISG15) cross-link. Lys-362 carries the post-translational modification N6-acetyllysine. The residue at position 381 (Ser-381) is a Phosphoserine. Position 382 is a diphosphoserine (Ser-382). Ser-382 is modified (phosphoserine; by TBK1). A Phosphoserine; by IKKE modification is found at Ser-392. Position 394 is a phosphoserine (Ser-394). The residue at position 400 (Thr-400) is a Phosphothreonine.

This sequence belongs to the IRF family. As to quaternary structure, monomer. Homodimer; phosphorylation-induced. Interacts (when phosphorylated) with CREBBP. Interacts with MAVS (via phosphorylated pLxIS motif). Interacts with TICAM1 (via phosphorylated pLxIS motif). Interacts with STING1 (via phosphorylated pLxIS motif). Interacts with IKBKE and TBK1. Interacts with TICAM2. Interacts with RBCK1. Interacts with HERC5. Interacts with DDX3X; the interaction allows the phosphorylation and activation of IRF3 by IKBKE. Interacts with TRIM21 and ULK1, in the presence of TRIM21; this interaction leads to IRF3 degradation by autophagy. Interacts with RIOK3; RIOK3 probably mediates the interaction of TBK1 with IRF3. Interacts with ILRUN; the interaction inhibits IRF3 binding to its DNA consensus sequence. Interacts with LYAR; this interaction impairs IRF3 DNA-binding activity. Interacts with TRAF3. Interacts with ZDHHC11; ZDHHC11 recruits IRF3 to STING1 upon DNA virus infection and thereby promotes IRF3 activation. Interacts with HSP90AA1; the interaction mediates IRF3 association with TOMM70. Interacts with BCL2; the interaction decreases upon Sendai virus infection. Interacts with BAX; the interaction is direct, increases upon virus infection and mediates the formation of the apoptosis complex TOMM70:HSP90AA1:IRF3:BAX. Interacts with DDX56. Interacts with NBR1. Post-translationally, constitutively phosphorylated on many Ser/Thr residues. Activated following phosphorylation by TBK1 and IKBKE. Innate adapter proteins, such as MAVS, STING1 or TICAM1, are first activated by viral RNA, cytosolic DNA, and bacterial lipopolysaccharide (LPS), respectively, leading to activation of the kinases TBK1 and IKBKE. These kinases then phosphorylate the adapter proteins on the pLxIS motif, leading to recruitment of IRF3, thereby licensing IRF3 for phosphorylation by TBK1. Phosphorylation at Ser-382 is followed by pyrophosphorylation at the same residue, promoting phosphorylation at Ser-392. Phosphorylated IRF3 dissociates from the adapter proteins, dimerizes, and then enters the nucleus to induce IFNs. Pyrophosphorylated by UAP1 following phosphorylation at Ser-382 by TBK1. Pyrophosphorylation promotes subsequent phosphorylation at Ser-392, leading to homodimerization of IRF3. In terms of processing, acetylation at Lys-362 by KAT8 inhibits recruimtent to promoters and transcription factor activity. Acetylation by KAT8 is promoted by phosphorylation at Ser-392. Post-translationally, ubiquitinated; ubiquitination involves RBCK1 leading to proteasomal degradation. Polyubiquitinated; ubiquitination involves TRIM21 leading to proteasomal degradation. Ubiquitinated by UBE3C, leading to its degradation. Deubiquitinated by USP5 on both 'Lys-48'-linked unanchored and 'Lys-63'-linked anchored polyubiquitin, leading to inhibition of anti-RNA viral innate immunity. ISGylated by HERC5 resulting in sustained IRF3 activation and in the inhibition of IRF3 ubiquitination by disrupting PIN1 binding. The phosphorylation state of IRF3 does not alter ISGylation. In terms of processing, proteolytically cleaved by apoptotic caspases during apoptosis, leading to its inactivation. Cleavage by CASP3 during virus-induced apoptosis inactivates it, preventing cytokine overproduction.

The protein localises to the cytoplasm. It is found in the nucleus. It localises to the mitochondrion. In the absence of viral infection, maintained as a monomer in an autoinhibited state. Phosphorylation by TBK1 and IKBKE disrupts this autoinhibition leading to the liberation of the DNA-binding and dimerization activities and its nuclear localization where it can activate type I IFN and ISG genes. Phosphorylation and activation follow the following steps: innate adapter proteins, such as MAVS, STING1 or TICAM1, are first activated by viral RNA, cytosolic DNA and bacterial lipopolysaccharide (LPS), respectively, leading to activation of the kinases TBK1 and IKBKE. These kinases then phosphorylate the adapter proteins on their pLxIS motif, leading to recruitment of IRF3, thereby licensing IRF3 for phosphorylation by TBK1. Phosphorylated IRF3 dissociates from the adapter proteins, dimerizes, and then enters the nucleus to induce IFNs. Its function is as follows. Key transcriptional regulator of type I interferon (IFN)-dependent immune responses which plays a critical role in the innate immune response against DNA and RNA viruses. Regulates the transcription of type I IFN genes (IFN-alpha and IFN-beta) and IFN-stimulated genes (ISG) by binding to an interferon-stimulated response element (ISRE) in their promoters. Acts as a more potent activator of the IFN-beta (IFNB) gene than the IFN-alpha (IFNA) gene and plays a critical role in both the early and late phases of the IFNA/B gene induction. Found in an inactive form in the cytoplasm of uninfected cells and following viral infection, double-stranded RNA (dsRNA), or toll-like receptor (TLR) signaling, is phosphorylated by IKBKE and TBK1 kinases. This induces a conformational change, leading to its dimerization and nuclear localization and association with CREB binding protein (CREBBP) to form dsRNA-activated factor 1 (DRAF1), a complex which activates the transcription of the type I IFN and ISG genes. Can activate distinct gene expression programs in macrophages and can induce significant apoptosis in primary macrophages. The protein is Interferon regulatory factor 3 (IRF3) of Bos taurus (Bovine).